Here is a 347-residue protein sequence, read N- to C-terminus: Dihydroorotate dehydrogenase (quinone) (347 aa).

FMN-binding positions include 62 to 66 (AGLDK) and alanine 86. A substrate-binding site is contributed by lysine 66. 111 to 115 (NRMGF) is a substrate binding site. Residues asparagine 139 and asparagine 172 each coordinate FMN. Asparagine 172 contributes to the substrate binding site. The Nucleophile role is filled by serine 175. Asparagine 177 provides a ligand contact to substrate. FMN-binding residues include lysine 217 and threonine 245. 246–247 (NT) serves as a coordination point for substrate. FMN is bound by residues glycine 268, glycine 297, and 318 to 319 (YT).

The protein belongs to the dihydroorotate dehydrogenase family. Type 2 subfamily. Monomer. FMN serves as cofactor.

It localises to the cell membrane. The enzyme catalyses (S)-dihydroorotate + a quinone = orotate + a quinol. It participates in pyrimidine metabolism; UMP biosynthesis via de novo pathway; orotate from (S)-dihydroorotate (quinone route): step 1/1. In terms of biological role, catalyzes the conversion of dihydroorotate to orotate with quinone as electron acceptor. The sequence is that of Dihydroorotate dehydrogenase (quinone) from Coxiella burnetii (strain CbuK_Q154) (Coxiella burnetii (strain Q154)).